The sequence spans 166 residues: Transmembrane protein 190 (166 aa).

A signal peptide spans 1–21; sequence MVGSGISALGLLLLMQGSVDA. The Extracellular portion of the chain corresponds to 22 to 81; the sequence is NGIQGFFYPWSCEGDVWDRESCGGQAAIENPNLCLRLRCCYRDGVCYHQRPDENMRRKHM. The 41-residue stretch at 31 to 71 folds into the P-type domain; it reads WSCEGDVWDRESCGGQAAIENPNLCLRLRCCYRDGVCYHQR. Cystine bridges form between Cys33-Cys61, Cys43-Cys60, and Cys55-Cys67. A helical transmembrane segment spans residues 82–102; it reads WALGWTCGSLLFLITSICLFW. The Cytoplasmic portion of the chain corresponds to 103–166; sequence WARRQDMLHL…VSGEDTGGEE (64 aa). The segment at 130–166 is disordered; that stretch reads LSKDRRSANKSTTVLQSPGGEVETAAAVSGEDTGGEE.

Detected in testis and in a mixture of spermatogenic cells at various stages (testicular germ cells). Not detected in heart, brain, spleen, lung, liver, skeletal muscle and kidney.

The protein resides in the membrane. The sequence is that of Transmembrane protein 190 (Tmem190) from Mus musculus (Mouse).